The sequence spans 475 residues: 3-isopropylmalate dehydratase large subunit (475 aa).

The [4Fe-4S] cluster site is built by Cys349, Cys409, and Cys412.

Belongs to the aconitase/IPM isomerase family. LeuC type 1 subfamily. Heterodimer of LeuC and LeuD. It depends on [4Fe-4S] cluster as a cofactor.

It carries out the reaction (2R,3S)-3-isopropylmalate = (2S)-2-isopropylmalate. It functions in the pathway amino-acid biosynthesis; L-leucine biosynthesis; L-leucine from 3-methyl-2-oxobutanoate: step 2/4. Functionally, catalyzes the isomerization between 2-isopropylmalate and 3-isopropylmalate, via the formation of 2-isopropylmaleate. This chain is 3-isopropylmalate dehydratase large subunit, found in Cereibacter sphaeroides (strain ATCC 17029 / ATH 2.4.9) (Rhodobacter sphaeroides).